Consider the following 504-residue polypeptide: METLDAIQLPYLGVVGASLIVILGIILLFPLGSDPFITINQHPRDLFQTKAKQQFEYNAAALLNEGLQTGHSAFRLVTNMVTYLILKDQYAEEIKNDSRFGAHEAVDPVLLVDLPGLESMFQGSLHNQVPPMAVRALNKELVHLTPSLSEEAMNCLQTRWTDSTEWHGVSIPETVLALIAQMTTRALLGPELCRNPEWLDIAKSFTTNRAIAVAAVQSWPSFLQPVIHWFLPPCRALRRQIQCARNIILPALERERRAYCSDQPTKREFSNLVFIDQYAKGARYDATMAQLRIIAVAFQTTSDLVEKVIARLCKHPELIEPLREEVVSVVGNRGLHRHSLRKLTLMESVMKETQRLEPAVIIGMFRLAKEKVTLKDGTVVPKGTNIAFANDLRFDPEMYLEPETFDGYRFQRMREDPAKIDLAPFTKTRMSHLAFGHGKHACPGRFLACDEAKLILCHILLNYDIRAVEGSPPELRARGMFVQLDPGAMMSVRRRRGTETAPHG.

A helical transmembrane segment spans residues 12–32 (LGVVGASLIVILGIILLFPLG). Cysteine 442 is a heme binding site.

It belongs to the cytochrome P450 family. The cofactor is heme.

The protein resides in the membrane. It carries out the reaction fumitremorgin C + 2 reduced [NADPH--hemoprotein reductase] + 2 O2 = 12alpha,13alpha-dihydroxyfumitremorgin C + 2 oxidized [NADPH--hemoprotein reductase] + 2 H2O + 2 H(+). Its pathway is mycotoxin biosynthesis. Its function is as follows. Cytochrome P450 monooxygenase; part of the gene cluster that mediates the biosynthesis of fumitremorgins, indole alkaloids that carry not only intriguing chemical structures, but also interesting biological and pharmacological activities. The biosynthesis of fumitremorgin-type alkaloids begins by condensation of the two amino acids L-tryptophan and L-proline to brevianamide F, catalyzed by the non-ribosomal peptide synthetase ftmA. Brevianamide F is then prenylated by the prenyltransferase ftmPT1/ftmB in the presence of dimethylallyl diphosphate, resulting in the formation of tryprostatin B. The three cytochrome P450 monooxygenases, ftmP450-1/ftmC, ftmP450-2/ftmE and ftmP450-3/FtmG, are responsible for the conversion of tryprostatin B to 6-hydroxytryprostatin B, tryprostatin A to fumitremorgin C and fumitremorgin C to 12,13-dihydroxyfumitremorgin C, respectively. The putative methyltransferase ftmMT/ftmD is expected for the conversion of 6-hydroxytryprostatin B to tryprostatin A. FtmPT2/FtmH catalyzes the prenylation of 12,13-dihydroxyfumitre-morgin C in the presence of dimethylallyl diphosphate, resulting in the formation of fumitremorgin B. Fumitremorgin B is further converted to verruculogen by ftmOx1/ftmF via the insertion of an endoperoxide bond between the two prenyl moieties. In some fungal species, verruculogen is further converted to fumitremorgin A, but the enzymes involved in this step have not been identified yet. This is Fumitremorgin C monooxygenase from Aspergillus fumigatus (Neosartorya fumigata).